The chain runs to 291 residues: MSLRDKLFVTLQYLIPQHALSRLVGILARSEVPWIKTTFINMFMKRFGIDLSEAQIEDADQFPTFNAFFTRALKADARPLEASESNDIASPADGAVSQLGAIRANQVFQAKGHDYSLYDLLGGDSALASEFTNGQFATVYLSPRDYHRVHMPFTGTLRETRYVPGDLFSVNEATANGVPNLFARNERLVCIFDTEQGPMAVILVGAMIVAGIETVFSGQVTPLPKQVVTTDYLRSKPIALEKGEELGRFLLGSTVVMLFPEGKAKFAPNLKPGSQVRVRGKLGAYTNENKH.

Catalysis depends on charge relay system; for autoendoproteolytic cleavage activity residues aspartate 93, histidine 150, and serine 253. The Schiff-base intermediate with substrate; via pyruvic acid; for decarboxylase activity role is filled by serine 253. The residue at position 253 (serine 253) is a Pyruvic acid (Ser); by autocatalysis.

Belongs to the phosphatidylserine decarboxylase family. PSD-B subfamily. Prokaryotic type I sub-subfamily. Heterodimer of a large membrane-associated beta subunit and a small pyruvoyl-containing alpha subunit. It depends on pyruvate as a cofactor. In terms of processing, is synthesized initially as an inactive proenzyme. Formation of the active enzyme involves a self-maturation process in which the active site pyruvoyl group is generated from an internal serine residue via an autocatalytic post-translational modification. Two non-identical subunits are generated from the proenzyme in this reaction, and the pyruvate is formed at the N-terminus of the alpha chain, which is derived from the carboxyl end of the proenzyme. The autoendoproteolytic cleavage occurs by a canonical serine protease mechanism, in which the side chain hydroxyl group of the serine supplies its oxygen atom to form the C-terminus of the beta chain, while the remainder of the serine residue undergoes an oxidative deamination to produce ammonia and the pyruvoyl prosthetic group on the alpha chain. During this reaction, the Ser that is part of the protease active site of the proenzyme becomes the pyruvoyl prosthetic group, which constitutes an essential element of the active site of the mature decarboxylase.

It localises to the cell membrane. It carries out the reaction a 1,2-diacyl-sn-glycero-3-phospho-L-serine + H(+) = a 1,2-diacyl-sn-glycero-3-phosphoethanolamine + CO2. The protein operates within phospholipid metabolism; phosphatidylethanolamine biosynthesis; phosphatidylethanolamine from CDP-diacylglycerol: step 2/2. Its function is as follows. Catalyzes the formation of phosphatidylethanolamine (PtdEtn) from phosphatidylserine (PtdSer). The sequence is that of Phosphatidylserine decarboxylase proenzyme from Alcanivorax borkumensis (strain ATCC 700651 / DSM 11573 / NCIMB 13689 / SK2).